We begin with the raw amino-acid sequence, 362 residues long: Metacaspase-3 (362 aa).

Catalysis depends on residues histidine 174 and cysteine 230.

The protein belongs to the peptidase C14B family.

The sequence is that of Metacaspase-3 (AMC3) from Arabidopsis thaliana (Mouse-ear cress).